The sequence spans 360 residues: Phospho-N-acetylmuramoyl-pentapeptide-transferase (360 aa).

10 consecutive transmembrane segments (helical) span residues 26–46, 72–92, 94–114, 132–152, 168–188, 199–219, 236–256, 263–283, 288–308, and 338–358; these read AIVSLLTALFISLWMGPRMIA, PTMGGIMILTAITVSVLLWAY, SNPYVWCVLTVLIGYGIIGFV, WKYFWMSVIALGVAFALYLAG, VMPQLGLFYILLAYFVIVGTG, GLAIMPTVFVAAGFALVAWAT, AGELVIVCTAIVGAGLGFLWF, VFMGDVGSLALGGALGIIAVL, FLLVIMGGVFVVETLSVILQV, and VIVRFWIISLMLVLIGLATLK.

This sequence belongs to the glycosyltransferase 4 family. MraY subfamily. The cofactor is Mg(2+).

Its subcellular location is the cell inner membrane. It catalyses the reaction UDP-N-acetyl-alpha-D-muramoyl-L-alanyl-gamma-D-glutamyl-meso-2,6-diaminopimeloyl-D-alanyl-D-alanine + di-trans,octa-cis-undecaprenyl phosphate = di-trans,octa-cis-undecaprenyl diphospho-N-acetyl-alpha-D-muramoyl-L-alanyl-D-glutamyl-meso-2,6-diaminopimeloyl-D-alanyl-D-alanine + UMP. It participates in cell wall biogenesis; peptidoglycan biosynthesis. In terms of biological role, catalyzes the initial step of the lipid cycle reactions in the biosynthesis of the cell wall peptidoglycan: transfers peptidoglycan precursor phospho-MurNAc-pentapeptide from UDP-MurNAc-pentapeptide onto the lipid carrier undecaprenyl phosphate, yielding undecaprenyl-pyrophosphoryl-MurNAc-pentapeptide, known as lipid I. This chain is Phospho-N-acetylmuramoyl-pentapeptide-transferase, found in Klebsiella pneumoniae subsp. pneumoniae (strain ATCC 700721 / MGH 78578).